Here is a 310-residue protein sequence, read N- to C-terminus: Homeobox protein knotted-1-like 2 (310 aa).

The segment at 178–208 is disordered; it reads SDDGAVSSDEELREDDDIAADDSQQRSNDRD. Over residues 185–197 the composition is skewed to acidic residues; sequence SDEELREDDDIAA. Residues 208 to 228 form the ELK domain; sequence DLKDQLLRKFGSHISSLKLEF. The homeobox; TALE-type DNA-binding region spans 229 to 292; sequence SKKKKKGKLP…NQRKRHWKPS (64 aa).

Belongs to the TALE/KNOX homeobox family. As to quaternary structure, may form heterodimeric complex with the TALE/BELL protein BEL1, BLH1 and BLH2. Interacts with OFP12 and OFP14. Interacts with BZIP30. As to expression, expressed predominantly in shoot apices of seedlings, in the receptacle and developing pistil of flowers and in axillary buds of inflorescence stems.

It localises to the nucleus. Functionally, may play a role in meristem function, and may be involved in maintaining cells in an undifferentiated, meristematic state. Probably binds to the DNA sequence 5'-TGAC-3'. This is Homeobox protein knotted-1-like 2 (KNAT2) from Arabidopsis thaliana (Mouse-ear cress).